Here is a 328-residue protein sequence, read N- to C-terminus: Probable membrane-associated kinase regulator 4 (328 aa).

Positions 213–253 (GQIKTERPKKQSNGSVSGSHRRSFSVSMRRQAAKSSNNKSS) are disordered. The span at 223 to 240 (QSNGSVSGSHRRSFSVSM) shows a compositional bias: polar residues.

Its subcellular location is the cell membrane. The polypeptide is Probable membrane-associated kinase regulator 4 (MAKR4) (Arabidopsis thaliana (Mouse-ear cress)).